The primary structure comprises 238 residues: tRNA (guanine-N(7)-)-methyltransferase (238 aa).

Positions 68, 93, 120, and 143 each coordinate S-adenosyl-L-methionine. D143 is a catalytic residue. Substrate contacts are provided by residues K147, D179, and 216–219; that span reads TKFE.

It belongs to the class I-like SAM-binding methyltransferase superfamily. TrmB family.

It catalyses the reaction guanosine(46) in tRNA + S-adenosyl-L-methionine = N(7)-methylguanosine(46) in tRNA + S-adenosyl-L-homocysteine. It functions in the pathway tRNA modification; N(7)-methylguanine-tRNA biosynthesis. Its function is as follows. Catalyzes the formation of N(7)-methylguanine at position 46 (m7G46) in tRNA. The polypeptide is tRNA (guanine-N(7)-)-methyltransferase (Ectopseudomonas mendocina (strain ymp) (Pseudomonas mendocina)).